We begin with the raw amino-acid sequence, 359 residues long: Fructose-bisphosphate aldolase (359 aa).

Residue T11 is modified to Phosphothreonine. K27 participates in a covalent cross-link: Glycyl lysine isopeptide (Lys-Gly) (interchain with G-Cter in ubiquitin). A phosphoserine mark is found at S56 and S63. S63 contacts D-glyceraldehyde 3-phosphate. A Glycyl lysine isopeptide (Lys-Gly) (interchain with G-Cter in ubiquitin) cross-link involves residue K73. A phosphoserine mark is found at S76 and S83. K85 is covalently cross-linked (Glycyl lysine isopeptide (Lys-Gly) (interchain with G-Cter in ubiquitin)). Residue S96 is modified to Phosphoserine. Catalysis depends on D110, which acts as the Proton donor. Zn(2+) is bound by residues H111 and D145. At S147 the chain carries Phosphoserine. At T150 the chain carries Phosphothreonine. Residue E175 coordinates Zn(2+). A Phosphothreonine modification is found at T179. Residue H227 coordinates Zn(2+). G228 contributes to the dihydroxyacetone phosphate binding site. Position 265 (H265) interacts with Zn(2+). Residues 266 to 268 and 287 to 290 contribute to the dihydroxyacetone phosphate site; these read GGS and NLDT. Position 268 is a phosphoserine (S268). T290 carries the phosphothreonine modification. K308 participates in a covalent cross-link: Glycyl lysine isopeptide (Lys-Gly) (interchain with G-Cter in ubiquitin). Y310 carries the post-translational modification Phosphotyrosine. S313 carries the post-translational modification Phosphoserine.

Belongs to the class II fructose-bisphosphate aldolase family. In terms of assembly, homodimer. Zn(2+) is required as a cofactor.

It catalyses the reaction beta-D-fructose 1,6-bisphosphate = D-glyceraldehyde 3-phosphate + dihydroxyacetone phosphate. The protein operates within carbohydrate degradation; glycolysis; D-glyceraldehyde 3-phosphate and glycerone phosphate from D-glucose: step 4/4. Functionally, catalyzes the aldol condensation of dihydroxyacetone phosphate (DHAP or glycerone-phosphate) with glyceraldehyde 3-phosphate (G3P) to form fructose 1,6-bisphosphate (FBP) in gluconeogenesis and the reverse reaction in glycolysis. The chain is Fructose-bisphosphate aldolase (FBA1) from Saccharomyces cerevisiae (strain ATCC 204508 / S288c) (Baker's yeast).